Here is an 85-residue protein sequence, read N- to C-terminus: U4-theraphotoxin-Hhn1z (85 aa).

An N-terminal signal peptide occupies residues 1 to 22 (MKMTLIAILTCAAVLVLHTTAA). Residues 23-48 (EELEAESQLMEVGMPDTELEAVDEER) constitute a propeptide that is removed on maturation. 3 cysteine pairs are disulfide-bonded: cysteine 52/cysteine 66, cysteine 56/cysteine 77, and cysteine 71/cysteine 82.

It belongs to the neurotoxin 12 (Hwtx-2) family. 02 (Hwtx-2) subfamily. In terms of tissue distribution, expressed by the venom gland.

The protein resides in the secreted. Functionally, postsynaptic neurotoxin. The chain is U4-theraphotoxin-Hhn1z from Cyriopagopus hainanus (Chinese bird spider).